Reading from the N-terminus, the 1108-residue chain is Multidrug resistance regulator 1 (1108 aa).

Positions 1–19 (MSIATTPIETPKSPKSTEP) are enriched in polar residues. Residues 1-27 (MSIATTPIETPKSPKSTEPQVRKRKKV) are disordered. Residues 31–59 (CTNCRKRKIRCDRQHPCNNCIKSKKHNAC) constitute a DNA-binding region (zn(2)-C6 fungal-type). Polar residues predominate over residues 68–83 (PANFSTNGSSHGNTVP). 3 disordered regions span residues 68–138 (PANF…SENE), 968–990 (DQTY…LDSR), and 1021–1064 (AQQQ…YYGN). Composition is skewed to basic and acidic residues over residues 86 to 104 (RPYE…EAPR) and 114 to 123 (NERKNSKKSP). Over residues 124–138 (DNTVANNQQTASENE) the composition is skewed to polar residues. Residues 134–165 (ASENEVTITLSELNMLKQRLQNIEANINAQSN) are a coiled coil. Composition is skewed to low complexity over residues 970 to 980 (TYSTSSESSST) and 1023 to 1041 (QQRQ…QSQS).

Its subcellular location is the nucleus. In terms of biological role, transcription factor that acts as the central regulator of the MDR1 efflux pump. Other target genes include those encoding oxidoreductases, whose up-regulation in fluconazole-resistant isolates may help to prevent cell damage resulting from the generation of toxic molecules in the presence of fluconazole and thereby contribute to drug resistance. This Candida albicans (strain SC5314 / ATCC MYA-2876) (Yeast) protein is Multidrug resistance regulator 1.